The following is a 474-amino-acid chain: Putative matrix metalloproteinase (474 aa).

The first 17 residues, 1–17 (MIIYFAVITCSLKLCRS), serve as a signal peptide directing secretion. His-189 is a Zn(2+) binding site. Glu-190 is a catalytic residue. Residues His-193 and His-199 each contribute to the Zn(2+) site. The stretch at 299 to 344 (AGVYDAISYVRGDLYVFVGDLHWRFDTSGMLHNGYPQPTGATWRLP) is one Hemopexin repeat.

Belongs to the peptidase M10A family. Zn(2+) serves as cofactor.

The polypeptide is Putative matrix metalloproteinase (Heliothis virescens ascovirus 3e (HvAV-3e)).